A 92-amino-acid polypeptide reads, in one-letter code: Small ribosomal subunit protein uS19c (92 aa).

The protein belongs to the universal ribosomal protein uS19 family.

The protein localises to the plastid. It localises to the chloroplast. In terms of biological role, protein S19 forms a complex with S13 that binds strongly to the 16S ribosomal RNA. This is Small ribosomal subunit protein uS19c from Gossypium barbadense (Sea Island cotton).